The primary structure comprises 293 residues: Triosephosphate isomerase (293 aa).

A substrate-binding site is contributed by 25 to 27; that stretch reads NWK. Catalysis depends on H117, which acts as the Electrophile. The Proton acceptor role is filled by E218.

This sequence belongs to the triosephosphate isomerase family. Homodimer.

It localises to the cytoplasm. It carries out the reaction D-glyceraldehyde 3-phosphate = dihydroxyacetone phosphate. Its pathway is carbohydrate biosynthesis; gluconeogenesis. The protein operates within carbohydrate degradation; glycolysis; D-glyceraldehyde 3-phosphate from glycerone phosphate: step 1/1. Involved in the gluconeogenesis. Catalyzes stereospecifically the conversion of dihydroxyacetone phosphate (DHAP) to D-glyceraldehyde-3-phosphate (G3P). This is Triosephosphate isomerase from Tropheryma whipplei (strain TW08/27) (Whipple's bacillus).